Consider the following 406-residue polypeptide: GTPase Obg (406 aa).

The Obg domain maps to 1 to 159 (MRFVDEAVIT…REIRLELKVL (159 aa)). A disordered region spans residues 120–143 (GGEGGLGNTHFKSSTNRAPRKCTT). The 174-residue stretch at 160-333 (ADVGLLGMPN…VVYYLMDQIE (174 aa)) folds into the OBG-type G domain. Residues 166–173 (GMPNAGKS), 191–195 (FTTMV), 213–216 (DIPG), 283–286 (NKLD), and 314–316 (SGL) each bind GTP. Mg(2+)-binding residues include serine 173 and threonine 193. The segment at 381–406 (ESMMDDDDDFDDDEDDGDVESIYVRD) is disordered. Acidic residues predominate over residues 383–399 (MMDDDDDFDDDEDDGDV).

The protein belongs to the TRAFAC class OBG-HflX-like GTPase superfamily. OBG GTPase family. Monomer. Mg(2+) is required as a cofactor.

It is found in the cytoplasm. Its function is as follows. An essential GTPase which binds GTP, GDP and possibly (p)ppGpp with moderate affinity, with high nucleotide exchange rates and a fairly low GTP hydrolysis rate. Plays a role in control of the cell cycle, stress response, ribosome biogenesis and in those bacteria that undergo differentiation, in morphogenesis control. The chain is GTPase Obg from Acinetobacter baumannii (strain SDF).